A 637-amino-acid chain; its full sequence is SCF-associated factor 1 (637 aa).

Residues 14-63 enclose the F-box domain; it reads GLSPDIVQATLPFLSSDDIKNLSQTNKYYNTLLDFDHSKILWHELFHKAF. Residue Ser-16 is modified to Phosphoserine. Residues 109–202 form an RCC1 1 repeat; it reads AKFYSWGYLK…GFSFQILTES (94 aa). The interval 242-315 is disordered; the sequence is YPRITSRSNG…RTTMPSMGPH (74 aa). The span at 244-260 shows a compositional bias: polar residues; it reads RITSRSNGSTVNTTGTF. Residue Ser-266 is modified to Phosphoserine. Residues 289-305 show a composition bias toward low complexity; it reads SGGAPAASPGGSHSGVP. The stretch at 565 to 635 is one RCC1 2 repeat; the sequence is GHLYSWGIES…GWQTGALIIK (71 aa).

As to quaternary structure, interacts with AAH1, SKP1 and CDC53. Component of the SCF(SAF1) complex containing CDC53, SKP1, HRT1 and SAF1.

Its pathway is protein modification; protein ubiquitination. Substrate recognition component of a SCF (SKP1-CUL1-F-box protein) E3 ubiquitin-protein ligase complex which mediates the ubiquitination and subsequent proteasomal degradation of target proteins. Targets AAH1 adenine deaminase for proteasome-dependent degradation upon entry into quiescence. Targets also URA7. This is SCF-associated factor 1 (SAF1) from Saccharomyces cerevisiae (strain ATCC 204508 / S288c) (Baker's yeast).